Reading from the N-terminus, the 403-residue chain is Phosphoserine phosphatase RsbP (403 aa).

Residues 1–42 form the PAS domain; it reads MDKQLNDAPCGFLALSEEGSIIAANRTLIKILDYEPEQVIGQ. The PPM-type phosphatase domain occupies 191–402; the sequence is QVQIDSYYNA…DDECFILVDV (212 aa).

The cofactor is Mn(2+).

The enzyme catalyses O-phospho-L-serine + H2O = L-serine + phosphate. The catalysed reaction is O-phospho-D-serine + H2O = D-serine + phosphate. In terms of biological role, positive regulator of sigma-B activity. Dephosphorylates RsbV in response to energy stress. In Bacillus subtilis (strain 168), this protein is Phosphoserine phosphatase RsbP (rsbP).